The sequence spans 448 residues: Probable alpha-galactosidase B (448 aa).

An N-terminal signal peptide occupies residues 1–23; it reads MSRFHLPLAAAVVLVSCLWSANA. 2 cysteine pairs are disulfide-bonded: C46–C78 and C128–C158. The active-site Nucleophile is the D156. N-linked (GlcNAc...) asparagine glycans are attached at residues N163 and N181. 226-230 is a binding site for substrate; that stretch reads EWGQA. The N-linked (GlcNAc...) asparagine glycan is linked to N237. D248 serves as the catalytic Proton donor.

It belongs to the glycosyl hydrolase 27 family.

The protein resides in the secreted. It carries out the reaction Hydrolysis of terminal, non-reducing alpha-D-galactose residues in alpha-D-galactosides, including galactose oligosaccharides, galactomannans and galactolipids.. Hydrolyzes a variety of simple alpha-D-galactoside as well as more complex molecules such as oligosaccharides and polysaccharides. This is Probable alpha-galactosidase B (aglB) from Aspergillus clavatus (strain ATCC 1007 / CBS 513.65 / DSM 816 / NCTC 3887 / NRRL 1 / QM 1276 / 107).